Here is a 122-residue protein sequence, read N- to C-terminus: Basic phospholipase A2 Ts-G6D49 (122 aa).

Disulfide bonds link Cys-26–Cys-115, Cys-28–Cys-44, Cys-43–Cys-95, Cys-49–Cys-122, Cys-50–Cys-88, Cys-57–Cys-81, and Cys-75–Cys-86. Residues Tyr-27, Gly-29, and Gly-31 each coordinate Ca(2+). His-47 is an active-site residue. Position 48 (Asp-48) interacts with Ca(2+). Asp-89 is an active-site residue.

Ca(2+) serves as cofactor. As to expression, expressed by the venom gland.

It localises to the secreted. It catalyses the reaction a 1,2-diacyl-sn-glycero-3-phosphocholine + H2O = a 1-acyl-sn-glycero-3-phosphocholine + a fatty acid + H(+). In terms of biological role, snake venom phospholipase A2 that induces fast and sustaining local edema a few hours after injection (5-10 ug) in the hind paw, and prolongs the coagulation time of human plasma. Exhibits moderate hydrolytic activities and prefers the zwitterionic micelles (dPPC with Triton X-100) to the anionic micelles (dPPC with deoxycholate). PLA2 catalyzes the calcium-dependent hydrolysis of the 2-acyl groups in 3-sn-phosphoglycerides. The polypeptide is Basic phospholipase A2 Ts-G6D49 (Trimeresurus stejnegeri (Chinese green tree viper)).